A 103-amino-acid chain; its full sequence is MATVTLNVKTVRPLGERVLVKVSQSEEKTAGGILLPDTVKEKPQIGEIIAEGPGRRNDDGSFQPLEVTVNSKVLYSKYAGTDIKLENEEYVLLSEKDILAIIA.

It belongs to the GroES chaperonin family. Heptamer of 7 subunits arranged in a ring. Interacts with the chaperonin GroEL.

The protein localises to the plastid. It is found in the cyanelle. Together with the chaperonin GroEL, plays an essential role in assisting protein folding. The GroEL-GroES system forms a nano-cage that allows encapsulation of the non-native substrate proteins and provides a physical environment optimized to promote and accelerate protein folding. GroES binds to the apical surface of the GroEL ring, thereby capping the opening of the GroEL channel. This is Co-chaperonin GroES from Cyanophora paradoxa.